A 68-amino-acid polypeptide reads, in one-letter code: Amphipathic peptide OcyC1 (68 aa).

Positions Met-1 to Ala-23 are cleaved as a signal peptide. Phe-36 bears the Phenylalanine amide mark. Residues Arg-38 to Arg-68 constitute a propeptide that is removed on maturation.

Belongs to the non-disulfide-bridged peptide (NDBP) superfamily. Short antimicrobial peptide (group 4) family. As to expression, expressed by the venom gland.

Its subcellular location is the secreted. The protein resides in the target cell membrane. Functionally, antimicrobial peptide. Inhibits the growth of Gram-positive and Gram-negative bacteria. Shows antifungal activity with MIC values ranging from 12.5 to 25 uM. Also shows an inhibitory activity on C.albicans biofilms at high concentrations. Shows low cytotoxic activity and has weak hemolytic activity. The chain is Amphipathic peptide OcyC1 from Opisthacanthus cayaporum (South American scorpion).